A 707-amino-acid chain; its full sequence is Golgin candidate 1 (707 aa).

Residues 1–664 (MASWLKAAED…RATRFLWRYP (664 aa)) lie on the Cytoplasmic side of the membrane. Disordered regions lie at residues 22–106 (VVED…EIHP), 121–196 (VADT…SKRD), and 234–256 (QEPK…ADTT). Residues 38–47 (SGRKGSQGKR) are compositionally biased toward low complexity. Positions 56-67 (VKEESSNKRDSS) are enriched in basic and acidic residues. Over residues 68–80 (GDQSGPGVSQSEV) the composition is skewed to polar residues. The span at 83 to 95 (SKSSVSTDETSSS) shows a compositional bias: low complexity. Composition is skewed to basic and acidic residues over residues 139–150 (DGDRSESKHADG), 185–196 (TQRELDDSSKRD), and 245–254 (LKREQDRRAD). 2 coiled-coil regions span residues 287-424 (RVCA…NATK) and 452-608 (ADER…KSRV). Residues 665 to 685 (IARMFLLFYLVFVHLFLMYLI) traverse the membrane as a helical; Signal-anchor for type II membrane protein segment. Topologically, residues 686 to 707 (HRLQEQAEAQEVAAMTNNVFRL) are lumenal.

It is found in the golgi apparatus membrane. Its function is as follows. Golgi matrix protein playing a role in tethering of vesicles to Golgi membranes and in maintaining the overall structure of the Golgi apparatus. The protein is Golgin candidate 1 (GC1) of Arabidopsis thaliana (Mouse-ear cress).